A 627-amino-acid polypeptide reads, in one-letter code: Pescadillo homolog (627 aa).

One can recognise a BRCT domain in the interval 321 to 414; that stretch reads RLRTLFKGLK…QLLPTNKYFI (94 aa). Disordered regions lie at residues 436-471, 489-562, and 596-627; these read PEEKALHDPSLIETHEQSDDDSDEEAAQEEEEAVDQ, YKKY…LQAR, and FEAGEKEARKTAKRAARKEAAAAAAKASKLGK. Residues Ser453 and Ser457 each carry the phosphoserine modification. Acidic residues-rich tracts occupy residues 453-471 and 498-521; these read SDDDSDEEAAQEEEEAVDQ and VNEDEEDPEEDEEDEDEEEEEELD. Over residues 522–533 the composition is skewed to basic and acidic residues; it reads EQAKRLKEEKQK. Positions 540–549 are enriched in basic residues; it reads KVHKVNKRQL. Composition is skewed to basic and acidic residues over residues 550–559 and 596–605; these read HKAEVDEHRL and FEAGEKEARK. A compositionally biased stretch (low complexity) spans 616–627; that stretch reads AAAAAKASKLGK.

This sequence belongs to the pescadillo family.

It localises to the nucleus. Its subcellular location is the nucleolus. It is found in the nucleoplasm. Required for maturation of ribosomal RNAs and formation of the large ribosomal subunit. This is Pescadillo homolog from Drosophila ananassae (Fruit fly).